We begin with the raw amino-acid sequence, 419 residues long: Light-dependent chlorophyll f synthase (419 aa).

Helical transmembrane passes span 73-90 (YIGW…TAAI), 162-177 (HFII…EWEL), 186-200 (WISL…ASVS), 241-262 (LHQM…HGSL), and 323-337 (CLAA…SAAI). A chlorophyll is bound at residue His-162. His-242 serves as a coordination point for a chlorophyll.

The protein belongs to the reaction center PufL/M/PsbA/D family. As to quaternary structure, homodimer.

The protein localises to the cellular thylakoid membrane. Its function is as follows. Synthesizes chlorophyll f or chlorophyllide f (Chl f, 2-formyl chlorophyll a), probably by oxidation of chlorophyll a or chlorophyllide a and reduction of plastoquinone. The reaction is probably light-dependent. Chl f absorbs far red light (FRL, 707 nm in 100% methanol), and is synthesized when cells are grown in FRL, where it provides the advantage of extending the spectral range of harvested light in terrestrial cyanobacteria. Chl f synthesis is probably light-dependent. This chain is Light-dependent chlorophyll f synthase, found in Synechococcus sp. (strain ATCC 29403 / PCC 7335).